Consider the following 182-residue polypeptide: Adenine phosphoribosyltransferase (182 aa).

It belongs to the purine/pyrimidine phosphoribosyltransferase family. In terms of assembly, homodimer.

It is found in the cytoplasm. It carries out the reaction AMP + diphosphate = 5-phospho-alpha-D-ribose 1-diphosphate + adenine. The protein operates within purine metabolism; AMP biosynthesis via salvage pathway; AMP from adenine: step 1/1. Functionally, catalyzes a salvage reaction resulting in the formation of AMP, that is energically less costly than de novo synthesis. The protein is Adenine phosphoribosyltransferase of Streptomyces avermitilis (strain ATCC 31267 / DSM 46492 / JCM 5070 / NBRC 14893 / NCIMB 12804 / NRRL 8165 / MA-4680).